The chain runs to 51 residues: Large ribosomal subunit protein bL33 (51 aa).

The protein belongs to the bacterial ribosomal protein bL33 family.

The sequence is that of Large ribosomal subunit protein bL33 from Francisella tularensis subsp. tularensis (strain FSC 198).